The primary structure comprises 61 residues: Photosystem II reaction center protein K (61 aa).

Positions 1–24 (MLNIFSLICICINSALHSSSFFFA) are excised as a propeptide. A helical transmembrane segment spans residues 40–60 (MPVIPVLFFLLALVWQAAVSF).

This sequence belongs to the PsbK family. PSII is composed of 1 copy each of membrane proteins PsbA, PsbB, PsbC, PsbD, PsbE, PsbF, PsbH, PsbI, PsbJ, PsbK, PsbL, PsbM, PsbT, PsbX, PsbY, PsbZ, Psb30/Ycf12, at least 3 peripheral proteins of the oxygen-evolving complex and a large number of cofactors. It forms dimeric complexes.

The protein localises to the plastid. It localises to the chloroplast thylakoid membrane. Its function is as follows. One of the components of the core complex of photosystem II (PSII). PSII is a light-driven water:plastoquinone oxidoreductase that uses light energy to abstract electrons from H(2)O, generating O(2) and a proton gradient subsequently used for ATP formation. It consists of a core antenna complex that captures photons, and an electron transfer chain that converts photonic excitation into a charge separation. The sequence is that of Photosystem II reaction center protein K from Liriodendron tulipifera (Tuliptree).